Here is a 600-residue protein sequence, read N- to C-terminus: Transcription factor rlmA (600 aa).

An MADS-box domain is found at 1–61 (MGRRKIEIKA…KKLYEFSSCD (61 aa)). Disordered regions lie at residues 71-518 (YYGP…NIET) and 544-600 (GFGR…KSKT). Basic and acidic residues predominate over residues 75–89 (PHEHKGPEDFNGKRD). A compositionally biased stretch (polar residues) spans 151-160 (PQPQGASRPS). The segment covering 222-242 (QPLPPHAIPPHPMPQPVPPHH) has biased composition (pro residues). Residues 243-260 (QAPQHLPQHPHPLAQQTP) are compositionally biased toward low complexity. Residues 328–339 (HQRSLSSKSRSI) show a composition bias toward polar residues. A compositionally biased stretch (basic and acidic residues) spans 364–384 (PRTESADVKAEAKQNDSKEIK). The span at 386-397 (PAQPVAPPPPPR) shows a compositional bias: pro residues. Positions 440–452 (RGSATADSSSSTG) are enriched in low complexity. Positions 453–468 (NQTVTPAKANPDTNHS) are enriched in polar residues. Residues 490 to 501 (PPNPFARPPPPG) show a composition bias toward pro residues. Residues 503–515 (ASQNSNAYNSNNN) are compositionally biased toward low complexity.

It belongs to the MEF2 family. Interacts with hsp90. Phosphorylation during asexual development.

The protein resides in the nucleus. Transcription factor; part of cell wall integrity (CWI) signaling pathway composed of pkcA, the bck1-mkk2-mpka MAPK cascade and the downstream rlmA transcription regulator. The CWI signaling pathway regulates cell wall integrity and pyomelanin formation. CWI also controls oxidative stress response, gliotoxin production, iron adaptation and asexual development. Finally, CWI is constitutively required for A.fumigatus to cope with the temperature increase found in the mammalian lung environment, during infection. Positively regulates the phosphorylation of mpkA. Involved in tolerance to oxidative damage and transcriptional regulation of genes related to oxidative stress adaptation. Directly regulates the expression of regulators of conidiation, including flbB, flbC, brlA, abaA, and rasB, as well as genes involved in cell wall synthesis and remodeling. Specifically associates with the target fumiquinazoline (fmq) cluster genes promoters at conserved motifs (5'-TAWWWWTA-3') during conidiation to supplement mature conidia with fumiquinazoline C. Also controls the DHN-melanin production via binding the promoter of pksP. The polypeptide is Transcription factor rlmA (Aspergillus fumigatus (strain ATCC MYA-4609 / CBS 101355 / FGSC A1100 / Af293) (Neosartorya fumigata)).